Consider the following 65-residue polypeptide: uncharacterized protein (65 aa).

Positions 1–22 (MKFIKLFTFLVYLFVTLTNVFA) are cleaved as a signal peptide.

This is an uncharacterized protein from Invertebrate iridescent virus 6 (IIV-6).